The following is a 274-amino-acid chain: Rhamnulose-1-phosphate aldolase (274 aa).

The active site involves Glu-117. Residues His-141, His-143, and His-212 each contribute to the Zn(2+) site.

Belongs to the aldolase class II family. RhaD subfamily. As to quaternary structure, homotetramer. Zn(2+) serves as cofactor.

The protein resides in the cytoplasm. The enzyme catalyses L-rhamnulose 1-phosphate = (S)-lactaldehyde + dihydroxyacetone phosphate. It participates in carbohydrate degradation; L-rhamnose degradation; glycerone phosphate from L-rhamnose: step 3/3. Its function is as follows. Catalyzes the reversible cleavage of L-rhamnulose-1-phosphate to dihydroxyacetone phosphate (DHAP) and L-lactaldehyde. This is Rhamnulose-1-phosphate aldolase from Escherichia coli O127:H6 (strain E2348/69 / EPEC).